Here is a 398-residue protein sequence, read N- to C-terminus: Phosphoglycerate kinase (398 aa).

Residues 22 to 24 (DFN), Arg-38, 61 to 64 (HLGR), Arg-120, and Arg-153 contribute to the substrate site. Residues Lys-206, Gly-297, Glu-328, and 354-357 (GGDT) contribute to the ATP site.

It belongs to the phosphoglycerate kinase family. As to quaternary structure, monomer.

The protein resides in the cytoplasm. It carries out the reaction (2R)-3-phosphoglycerate + ATP = (2R)-3-phospho-glyceroyl phosphate + ADP. It participates in carbohydrate degradation; glycolysis; pyruvate from D-glyceraldehyde 3-phosphate: step 2/5. This chain is Phosphoglycerate kinase, found in Nautilia profundicola (strain ATCC BAA-1463 / DSM 18972 / AmH).